We begin with the raw amino-acid sequence, 559 residues long: Frizzled-5 (559 aa).

The N-terminal stretch at 1–26 is a signal peptide; that stretch reads MGSFRSGVFALSFVVLLLDYFAPAQA. The Extracellular segment spans residues 27 to 220; the sequence is ASKAIVCQEI…QPYFTQDEKM (194 aa). One can recognise an FZ domain in the interval 28–149; it reads SKAIVCQEIT…GDPDTLCMYY (122 aa). 5 disulfide bridges follow: C33–C94, C41–C87, C78–C116, C105–C146, and C109–C133. A glycan (N-linked (GlcNAc...) asparagine) is linked at N47. Residue N150 is glycosylated (N-linked (GlcNAc...) asparagine). A helical transmembrane segment spans residues 221–241; the sequence is FVTFWIGLWSILCFISTFTTV. The Cytoplasmic segment spans residues 242–257; it reads ATFLIDMERFRYPERP. Residues 258–278 traverse the membrane as a helical segment; sequence IIFLSACYLFVSIGYVVRLIV. The Extracellular segment spans residues 279-301; it reads GHENVACNKDHIHYETTGPALCT. A helical transmembrane segment spans residues 302–322; it reads IVFLLIYFFGMASSIWWVILT. Topologically, residues 323–343 are cytoplasmic; the sequence is FTWFLAAGMKWGNEAIASYSQ. The chain crosses the membrane as a helical span at residues 344-364; the sequence is YFHMAAWLIPSVKSIAVLALS. The Extracellular segment spans residues 365-387; the sequence is SVDGDPVAGICYVGNQNLDNLRG. A helical transmembrane segment spans residues 388 to 408; the sequence is FVLAPLVVYLFSGTMFLLAGF. Topologically, residues 409 to 434 are cytoplasmic; it reads VSLFRIRSVIKQGGTKTDKLEKLMIR. The chain crosses the membrane as a helical span at residues 435–455; it reads IGIFSVLYTVPATIVVACYIY. Over 456 to 483 the chain is Extracellular; it reads EQHYREHWEKTHNCSCPGDKQRYRPDYA. N468 carries N-linked (GlcNAc...) asparagine glycosylation. The chain crosses the membrane as a helical span at residues 484-504; the sequence is VFMLKYLMCLVVGITSGVWIW. At 505-559 the chain is on the cytoplasmic side; sequence SGKTLESWKRFTGRCCRNSKPINASAYSEASRALTPRTGLSNLTLPHKQVPLSHV. Residues 507-512 carry the Lys-Thr-X-X-X-Trp motif, mediates interaction with the PDZ domain of Dvl family members motif; the sequence is KTLESW. Positions 557–559 match the PDZ-binding motif; that stretch reads SHV.

Belongs to the G-protein coupled receptor Fz/Smo family. Expressed in retina.

It is found in the cell membrane. The protein localises to the golgi apparatus membrane. Its function is as follows. Receptor for Wnt proteins that functions in the canonical Wnt/beta-catenin signaling pathway. The canonical Wnt/beta-catenin signaling pathway leads to the activation of disheveled proteins, inhibition of GSK-3 kinase, nuclear accumulation of beta-catenin and activation of Wnt target genes. A second signaling pathway involving PKC and calcium fluxes has been seen for some family members, but it is not yet clear if it represents a distinct pathway or if it can be integrated in the canonical pathway, as PKC seems to be required for Wnt-mediated inactivation of GSK-3 kinase. Both pathways seem to involve interactions with G-proteins. May be involved in transduction and intercellular transmission of polarity information during tissue morphogenesis and/or in differentiated tissues. This Xenopus laevis (African clawed frog) protein is Frizzled-5 (fzd5).